We begin with the raw amino-acid sequence, 204 residues long: dTTP/UTP pyrophosphatase (204 aa).

Residue aspartate 68 is the Proton acceptor of the active site.

This sequence belongs to the Maf family. YhdE subfamily. It depends on a divalent metal cation as a cofactor.

Its subcellular location is the cytoplasm. It carries out the reaction dTTP + H2O = dTMP + diphosphate + H(+). The enzyme catalyses UTP + H2O = UMP + diphosphate + H(+). Functionally, nucleoside triphosphate pyrophosphatase that hydrolyzes dTTP and UTP. May have a dual role in cell division arrest and in preventing the incorporation of modified nucleotides into cellular nucleic acids. This is dTTP/UTP pyrophosphatase from Thermotoga petrophila (strain ATCC BAA-488 / DSM 13995 / JCM 10881 / RKU-1).